Here is a 263-residue protein sequence, read N- to C-terminus: Indole-3-glycerol phosphate synthase (263 aa).

It belongs to the TrpC family.

It carries out the reaction 1-(2-carboxyphenylamino)-1-deoxy-D-ribulose 5-phosphate + H(+) = (1S,2R)-1-C-(indol-3-yl)glycerol 3-phosphate + CO2 + H2O. It participates in amino-acid biosynthesis; L-tryptophan biosynthesis; L-tryptophan from chorismate: step 4/5. The protein is Indole-3-glycerol phosphate synthase of Rhodospirillum rubrum (strain ATCC 11170 / ATH 1.1.1 / DSM 467 / LMG 4362 / NCIMB 8255 / S1).